Reading from the N-terminus, the 559-residue chain is 2-succinyl-5-enolpyruvyl-6-hydroxy-3-cyclohexene-1-carboxylate synthase (559 aa).

This sequence belongs to the TPP enzyme family. MenD subfamily. Homodimer. The cofactor is Mg(2+). Requires Mn(2+) as cofactor. Thiamine diphosphate is required as a cofactor.

It catalyses the reaction isochorismate + 2-oxoglutarate + H(+) = 5-enolpyruvoyl-6-hydroxy-2-succinyl-cyclohex-3-ene-1-carboxylate + CO2. The protein operates within quinol/quinone metabolism; 1,4-dihydroxy-2-naphthoate biosynthesis; 1,4-dihydroxy-2-naphthoate from chorismate: step 2/7. It functions in the pathway quinol/quinone metabolism; menaquinone biosynthesis. Its function is as follows. Catalyzes the thiamine diphosphate-dependent decarboxylation of 2-oxoglutarate and the subsequent addition of the resulting succinic semialdehyde-thiamine pyrophosphate anion to isochorismate to yield 2-succinyl-5-enolpyruvyl-6-hydroxy-3-cyclohexene-1-carboxylate (SEPHCHC). This Cytophaga hutchinsonii (strain ATCC 33406 / DSM 1761 / CIP 103989 / NBRC 15051 / NCIMB 9469 / D465) protein is 2-succinyl-5-enolpyruvyl-6-hydroxy-3-cyclohexene-1-carboxylate synthase.